The primary structure comprises 463 residues: Putative protein FAM90A2P (463 aa).

4 disordered regions span residues Met1–Leu42, Ala67–Lys115, Met150–Ala295, and Ala326–Ser365. 3 stretches are compositionally biased toward basic and acidic residues: residues Gly74–Lys83, Asn97–Arg114, and Pro159–Ala170. Residues Leu180 to Gly198 show a composition bias toward low complexity.

It belongs to the FAM90 family.

The polypeptide is Putative protein FAM90A2P (FAM90A2P) (Homo sapiens (Human)).